The chain runs to 394 residues: Protein-glutamate methylesterase/protein-glutamine glutaminase of group 2 operon (394 aa).

Residues 21–139 (RVMVVDDSAV…ELTGADTFKR (119 aa)) enclose the Response regulatory domain. Residue Asp-72 is modified to 4-aspartylphosphate. A disordered region spans residues 148–201 (LGAAARRSGPRREGTAAARPPGAAAQPTSGYTLPSPVRAKPETGPLTVRPLPPD). Low complexity predominate over residues 162–172 (TAAARPPGAAA). Positions 200–382 (PDGRPDVIAI…SAILPLKEIG (183 aa)) constitute a CheB-type methylesterase domain. Active-site residues include Ser-212, His-238, and Asp-334.

The protein belongs to the CheB family. In terms of processing, phosphorylated by CheA. Phosphorylation of the N-terminal regulatory domain activates the methylesterase activity.

The protein resides in the cytoplasm. It carries out the reaction [protein]-L-glutamate 5-O-methyl ester + H2O = L-glutamyl-[protein] + methanol + H(+). The catalysed reaction is L-glutaminyl-[protein] + H2O = L-glutamyl-[protein] + NH4(+). Functionally, involved in chemotaxis. Part of a chemotaxis signal transduction system that modulates chemotaxis in response to various stimuli. Catalyzes the demethylation of specific methylglutamate residues introduced into the chemoreceptors (methyl-accepting chemotaxis proteins or MCP) by CheR. Also mediates the irreversible deamidation of specific glutamine residues to glutamic acid. The protein is Protein-glutamate methylesterase/protein-glutamine glutaminase of group 2 operon of Rhodospirillum centenum (strain ATCC 51521 / SW).